A 450-amino-acid polypeptide reads, in one-letter code: Histidinol dehydrogenase (450 aa).

NAD(+) is bound by residues tyrosine 135, glutamine 197, and asparagine 225. Substrate contacts are provided by threonine 248, glutamine 270, and histidine 273. Zn(2+) contacts are provided by glutamine 270 and histidine 273. Catalysis depends on proton acceptor residues glutamate 339 and histidine 340. Residues histidine 340, aspartate 373, glutamate 427, and histidine 432 each coordinate substrate. Aspartate 373 provides a ligand contact to Zn(2+). Histidine 432 contributes to the Zn(2+) binding site.

The protein belongs to the histidinol dehydrogenase family. Requires Zn(2+) as cofactor.

The enzyme catalyses L-histidinol + 2 NAD(+) + H2O = L-histidine + 2 NADH + 3 H(+). Its pathway is amino-acid biosynthesis; L-histidine biosynthesis; L-histidine from 5-phospho-alpha-D-ribose 1-diphosphate: step 9/9. In terms of biological role, catalyzes the sequential NAD-dependent oxidations of L-histidinol to L-histidinaldehyde and then to L-histidine. The chain is Histidinol dehydrogenase from Corynebacterium jeikeium (strain K411).